A 195-amino-acid chain; its full sequence is Capsid protein (195 aa).

A disordered region spans residues 148–195 (NAPILSTLPETTVVRRRGRSPRRRTPSPRRRRSQSPRRRRSASPASQC). Residues 161 to 188 (VRRRGRSPRRRTPSPRRRRSQSPRRRRS) show a composition bias toward basic residues. Phosphoserine; by host is present on residues Ser-167, Ser-174, and Ser-182. The stretch at 167-172 (SPRRRT) is one 1; half-length repeat. The 3 X 7 AA repeats of S-P-R-R-R-[PR]-S stretch occupies residues 167 to 188 (SPRRRTPSPRRRRSQSPRRRRS). The short motif at 170 to 187 (RRTPSPRRRRSQSPRRRR) is the Bipartite nuclear localization signal element. Tandem repeats lie at residues 174–180 (SPRRRRS) and 182–188 (SPRRRRS). The tract at residues 189-195 (ASPASQC) is RNA binding.

Belongs to the orthohepadnavirus core antigen family. In terms of assembly, homodimerizes, then multimerizes. Interacts with cytosol exposed regions of viral L glycoprotein present in the reticulum-to-Golgi compartment. Interacts with human FLNB. Phosphorylated form interacts with host importin alpha; this interaction depends on the exposure of the NLS, which itself depends upon genome maturation and/or phosphorylation of the capsid protein. Interacts with host NUP153. In terms of processing, phosphorylated by host SRPK1, SRPK2, and maybe protein kinase C or GAPDH. Phosphorylation is critical for pregenomic RNA packaging. Protein kinase C phosphorylation is stimulated by HBx protein and may play a role in transport of the viral genome to the nucleus at the late step during the viral replication cycle.

It localises to the virion. Its subcellular location is the host cytoplasm. Its function is as follows. Self assembles to form an icosahedral capsid. Most capsids appear to be large particles with an icosahedral symmetry of T=4 and consist of 240 copies of capsid protein, though a fraction forms smaller T=3 particles consisting of 180 capsid proteins. Entering capsids are transported along microtubules to the nucleus. Phosphorylation of the capsid is thought to induce exposure of nuclear localization signal in the C-terminal portion of the capsid protein that allows binding to the nuclear pore complex via the importin (karyopherin-) alpha and beta. Capsids are imported in intact form through the nuclear pore into the nuclear basket, where it probably binds NUP153. Only capsids that contain the mature viral genome can release the viral DNA and capsid protein into the nucleoplasm. Immature capsids get stuck in the basket. Capsids encapsulate the pre-genomic RNA and the P protein. Pre-genomic RNA is reverse-transcribed into DNA while the capsid is still in the cytoplasm. The capsid can then either be directed to the nucleus, providing more genomes for transcription, or bud through the endoplasmic reticulum to provide new virions. In Hepatitis B virus genotype G (isolate IG29227/2000) (HBV-G), this protein is Capsid protein.